Reading from the N-terminus, the 877-residue chain is Potassium transporter 23 (877 aa).

2 disordered regions span residues 1-60 and 72-92; these read MDDD…SLDG and ASAG…RASS. Topologically, residues 1 to 126 are cytoplasmic; that stretch reads MDDDDSGIQE…RGAHGHSSKE (126 aa). Over residues 12 to 28 the composition is skewed to pro residues; sequence PAPPPPPPPPPPPPPPL. A compositionally biased stretch (gly residues) spans 76–86; that stretch reads GASGGGGGGGP. The chain crosses the membrane as a helical span at residues 127–147; sequence ISMLSTVAMAFQTLGVVYGDM. The Extracellular segment spans residues 148 to 173; it reads GTSPLYVFSDVFSKVPIKSEVEILGA. The chain crosses the membrane as a helical span at residues 174–194; sequence LSLVMYTIALIPFAKYVFIVL. The Cytoplasmic segment spans residues 195–260; sequence KANDNGEGGT…SLEKNPVFKN (66 aa). Residues 261-281 traverse the membrane as a helical segment; it reads ILLFLVLMGTSMVIGDGILTP. Residues 282–295 lie on the Extracellular side of the membrane; the sequence is SMSVMSAVSGLQGR. The chain crosses the membrane as a helical span at residues 296–316; that stretch reads VPGFGTDAVVIVSILFLVLLF. Topologically, residues 317–325 are cytoplasmic; that stretch reads SVQRFGTGK. A helical transmembrane segment spans residues 326–346; the sequence is VGFMFAPILALWFINLGTIGI. Over 347 to 379 the chain is Extracellular; the sequence is YNLAKYDISVVRAFNPVYIYLFFQTNGIKAWSA. Residues 380–400 traverse the membrane as a helical segment; sequence LGGCVLCITGAEAMFADLGHF. Topologically, residues 401–406 are cytoplasmic; sequence SVKSIQ. The helical transmembrane segment at 407-427 threads the bilayer; it reads VAFTAVVFPCLLIAYMGQAAY. Residues 428–441 are Extracellular-facing; it reads LMKYPFAVERIFYD. Residues 442 to 462 form a helical membrane-spanning segment; sequence SVPEILFWPVFVIATLAAMIA. Topologically, residues 463-498 are cytoplasmic; that stretch reads SQAMISATFSCIKQAMALGCFPRIKIIHTSKKVMGQ. A helical transmembrane segment spans residues 499–519; it reads IYIPVMNWFLMVMCIIIVATF. Residues 520 to 524 are Extracellular-facing; it reads RSTND. The chain crosses the membrane as a helical span at residues 525 to 545; it reads IANAYGIAEVGVMMVSTALVT. Over 546–555 the chain is Cytoplasmic; sequence LVMLLIWQTN. A helical transmembrane segment spans residues 556–578; sequence LFLVMCFPVIFGSVEFVYLTAVL. The Extracellular portion of the chain corresponds to 579 to 583; the sequence is SKIQE. The helical transmembrane segment at 584–604 threads the bilayer; the sequence is GGWLPLAFSSLFLCIMYTWNY. Residues 605-877 lie on the Cytoplasmic side of the membrane; that stretch reads GSVLKYQSEM…IMRVGMTYMV (273 aa).

The protein belongs to the HAK/KUP transporter (TC 2.A.72.3) family.

It localises to the membrane. High-affinity potassium transporter. This is Potassium transporter 23 (HAK23) from Oryza sativa subsp. japonica (Rice).